A 239-amino-acid polypeptide reads, in one-letter code: Ribonuclease PH (239 aa).

Residues Arg-86 and 124 to 126 (GTR) contribute to the phosphate site.

Belongs to the RNase PH family. Homohexameric ring arranged as a trimer of dimers.

It carries out the reaction tRNA(n+1) + phosphate = tRNA(n) + a ribonucleoside 5'-diphosphate. Phosphorolytic 3'-5' exoribonuclease that plays an important role in tRNA 3'-end maturation. Removes nucleotide residues following the 3'-CCA terminus of tRNAs; can also add nucleotides to the ends of RNA molecules by using nucleoside diphosphates as substrates, but this may not be physiologically important. Probably plays a role in initiation of 16S rRNA degradation (leading to ribosome degradation) during starvation. This Cupriavidus taiwanensis (strain DSM 17343 / BCRC 17206 / CCUG 44338 / CIP 107171 / LMG 19424 / R1) (Ralstonia taiwanensis (strain LMG 19424)) protein is Ribonuclease PH.